Here is a 352-residue protein sequence, read N- to C-terminus: C-C chemokine receptor type 5 (352 aa).

Over Met-1 to Ala-30 the chain is Extracellular. Residue Tyr-3 is modified to Sulfotyrosine. Ser-6 and Ser-7 each carry an O-linked (GalNAc...) serine glycan. Residues Tyr-10, Tyr-14, and Tyr-15 each carry the sulfotyrosine modification. 2 disulfide bridges follow: Cys-20/Cys-269 and Cys-101/Cys-178. Residues Arg-31 to Cys-58 traverse the membrane as a helical segment. At Lys-59–Tyr-68 the chain is on the cytoplasmic side. Residues Leu-69 to Tyr-89 form a helical membrane-spanning segment. At Ala-90–Gln-102 the chain is on the extracellular side. The helical transmembrane segment at Leu-103 to Ile-124 threads the bilayer. Residues Asp-125 to Thr-141 lie on the Cytoplasmic side of the membrane. A helical membrane pass occupies residues Val-142 to Phe-166. Topologically, residues Thr-167 to Ile-198 are extracellular. The chain crosses the membrane as a helical span at residues Val-199–Leu-218. Residues Lys-219–Arg-235 lie on the Cytoplasmic side of the membrane. Residues Leu-236–Phe-260 traverse the membrane as a helical segment. Topologically, residues Gln-261–Gln-277 are extracellular. Residues Ala-278–Gly-301 traverse the membrane as a helical segment. Residues Glu-302–Leu-352 lie on the Cytoplasmic side of the membrane. S-palmitoyl cysteine attachment occurs at residues Cys-321, Cys-323, and Cys-324. Ser-336, Ser-337, Ser-342, and Ser-349 each carry phosphoserine; by BARK1.

It belongs to the G-protein coupled receptor 1 family. Interacts with PRAF2. Efficient ligand binding to CCL3/MIP-1alpha and CCL4/MIP-1beta requires sulfation, O-glycosylation and sialic acid modifications. Glycosylation on Ser-6 is required for efficient binding of CCL4. Interacts with GRK2. Interacts with ARRB1 and ARRB2. Interacts with CNIH4. Interacts with S100A4; this interaction stimulates T-lymphocyte chemotaxis. As to quaternary structure, (Microbial infection) Interacts with HIV-1 surface protein gp120. In terms of assembly, (Microbial infection) May interact with human cytomegalovirus/HHV-5 protein UL78. Sulfated on at least 2 of the N-terminal tyrosines. Sulfation contributes to the efficiency of HIV-1 entry and is required for efficient binding of the chemokines, CCL3 and CCL4. In terms of processing, O-glycosylated, but not N-glycosylated. Ser-6 appears to be the major site even if Ser-7 may be also O-glycosylated. Also sialylated glycans present which contribute to chemokine binding. Thr-16 and Ser-17 may also be glycosylated and, if so, with small moieties such as a T-antigen. Post-translationally, palmitoylation in the C-terminal is important for cell surface expression, and to a lesser extent, for HIV entry. Phosphorylation on serine residues in the C-terminal is stimulated by binding CC chemokines especially by APO-RANTES. In terms of tissue distribution, highly expressed in spleen, thymus, in the myeloid cell line THP-1, in the promyeloblastic cell line KG-1a and on CD4+ and CD8+ T-cells. Medium levels in peripheral blood leukocytes and in small intestine. Low levels in ovary and lung.

Its subcellular location is the cell membrane. Receptor for a number of inflammatory CC-chemokines including CCL3/MIP-1-alpha, CCL4/MIP-1-beta and RANTES and subsequently transduces a signal by increasing the intracellular calcium ion level. May play a role in the control of granulocytic lineage proliferation or differentiation. Participates in T-lymphocyte migration to the infection site by acting as a chemotactic receptor. Functionally, (Microbial infection) Acts as a coreceptor (CD4 being the primary receptor) of human immunodeficiency virus-1/HIV-1. The protein is C-C chemokine receptor type 5 of Homo sapiens (Human).